Reading from the N-terminus, the 498-residue chain is ATP synthase subunit beta, chloroplastic (498 aa).

172–179 (GGAGVGKT) is a binding site for ATP.

It belongs to the ATPase alpha/beta chains family. F-type ATPases have 2 components, CF(1) - the catalytic core - and CF(0) - the membrane proton channel. CF(1) has five subunits: alpha(3), beta(3), gamma(1), delta(1), epsilon(1). CF(0) has four main subunits: a(1), b(1), b'(1) and c(9-12).

The protein localises to the plastid. The protein resides in the chloroplast thylakoid membrane. The enzyme catalyses ATP + H2O + 4 H(+)(in) = ADP + phosphate + 5 H(+)(out). In terms of biological role, produces ATP from ADP in the presence of a proton gradient across the membrane. The catalytic sites are hosted primarily by the beta subunits. The protein is ATP synthase subunit beta, chloroplastic of Solanum lycopersicum (Tomato).